The primary structure comprises 129 residues: Cytochrome c oxidase subunit 5B, mitochondrial (129 aa).

Residues 1–31 (MASRLLRGAGTLAAQALRARGPSGAAAMRSM) constitute a mitochondrion transit peptide. N6-acetyllysine is present on residues Lys-68 and Lys-86. Residues Cys-91, Cys-93, Cys-113, and Cys-116 each coordinate Zn(2+). An N6-acetyllysine modification is found at Lys-121.

The protein belongs to the cytochrome c oxidase subunit 5B family. Component of the cytochrome c oxidase (complex IV, CIV), a multisubunit enzyme composed of 14 subunits. The complex is composed of a catalytic core of 3 subunits MT-CO1, MT-CO2 and MT-CO3, encoded in the mitochondrial DNA, and 11 supernumerary subunits COX4I1 (or COX4I2), COX5A, COX5B, COX6A1 (or COX6A2), COX6B1 (or COX6B2), COX6C, COX7A2 (or COX7A1), COX7B, COX7C, COX8A and NDUFA4, which are encoded in the nuclear genome. The complex exists as a monomer or a dimer and forms supercomplexes (SCs) in the inner mitochondrial membrane with NADH-ubiquinone oxidoreductase (complex I, CI) and ubiquinol-cytochrome c oxidoreductase (cytochrome b-c1 complex, complex III, CIII), resulting in different assemblies (supercomplex SCI(1)III(2)IV(1) and megacomplex MCI(2)III(2)IV(2)).

The protein localises to the mitochondrion inner membrane. The protein operates within energy metabolism; oxidative phosphorylation. Its function is as follows. Component of the cytochrome c oxidase, the last enzyme in the mitochondrial electron transport chain which drives oxidative phosphorylation. The respiratory chain contains 3 multisubunit complexes succinate dehydrogenase (complex II, CII), ubiquinol-cytochrome c oxidoreductase (cytochrome b-c1 complex, complex III, CIII) and cytochrome c oxidase (complex IV, CIV), that cooperate to transfer electrons derived from NADH and succinate to molecular oxygen, creating an electrochemical gradient over the inner membrane that drives transmembrane transport and the ATP synthase. Cytochrome c oxidase is the component of the respiratory chain that catalyzes the reduction of oxygen to water. Electrons originating from reduced cytochrome c in the intermembrane space (IMS) are transferred via the dinuclear copper A center (CU(A)) of subunit 2 and heme A of subunit 1 to the active site in subunit 1, a binuclear center (BNC) formed by heme A3 and copper B (CU(B)). The BNC reduces molecular oxygen to 2 water molecules using 4 electrons from cytochrome c in the IMS and 4 protons from the mitochondrial matrix. This is Cytochrome c oxidase subunit 5B, mitochondrial (COX5B) from Homo sapiens (Human).